The chain runs to 194 residues: Translation machinery-associated protein 22 (194 aa).

The SUI1 domain occupies 102-173; that stretch reads VQIKRVERNK…DVQEWLLEVY (72 aa).

Belongs to the DENR family. As to quaternary structure, interacts with the 40S ribosomal subunit.

It is found in the cytoplasm. The sequence is that of Translation machinery-associated protein 22 (tma22) from Aspergillus clavatus (strain ATCC 1007 / CBS 513.65 / DSM 816 / NCTC 3887 / NRRL 1 / QM 1276 / 107).